The sequence spans 344 residues: tRNA N6-adenosine threonylcarbamoyltransferase (344 aa).

2 residues coordinate Fe cation: His119 and His123. Substrate is bound by residues 141-145 (VVSGG), Asp174, Gly187, Asp191, and Asn280. Asp310 contributes to the Fe cation binding site.

It belongs to the KAE1 / TsaD family. Requires Fe(2+) as cofactor.

It is found in the cytoplasm. It catalyses the reaction L-threonylcarbamoyladenylate + adenosine(37) in tRNA = N(6)-L-threonylcarbamoyladenosine(37) in tRNA + AMP + H(+). Its function is as follows. Required for the formation of a threonylcarbamoyl group on adenosine at position 37 (t(6)A37) in tRNAs that read codons beginning with adenine. Is involved in the transfer of the threonylcarbamoyl moiety of threonylcarbamoyl-AMP (TC-AMP) to the N6 group of A37, together with TsaE and TsaB. TsaD likely plays a direct catalytic role in this reaction. The protein is tRNA N6-adenosine threonylcarbamoyltransferase of Listeria monocytogenes serovar 1/2a (strain ATCC BAA-679 / EGD-e).